Here is a 486-residue protein sequence, read N- to C-terminus: MGSRLHTREIQNGPPLPYNDDIRAFSKEYAESLDAQDPLHRFRNEFVIPSKEDLKRTTLDPNQEPEHSPTPSLYLCGNSLGLQPQSTRKYIEYYLRAWATKGVTGHFVQHDDQLLPPFVDVDAAGARLMAPIVGAMESEVAVMGTLTTNLHILMASFYQPTQERYKIIIEGKAFPSDHYAVESQIKHHNFDPKDGMVLIEPEDHTRPVLDTEHIIRTIDEHASSTAVILLSAIQYYTGQYFDIKRITAHAQSKGILVGWDCAHAAGNVDLQLHDWNVDFAAWCTYKYLNSGPGGTAALFVHERHGRVNLEQVNSESEPFRPRLSGWWGGDKKTRFLMDNNFIPQPGAAGFQLSNPSVLDMNAVVASLELFKQASMAEIRKKSLHITGYLEHLLLNYPLDTPSEKKPFTIITPSNPAERGAQLSVRLQPGLLDHVLETLEDNAVVIDERKPDVIRVAPAPLYNTYTDVWEFCRIFHEACQKALKARG.

Residues 53 to 72 form a disordered region; that stretch reads DLKRTTLDPNQEPEHSPTPS. Residues L146, T147, 174-177, S231, D260, H263, and Y285 contribute to the pyridoxal 5'-phosphate site; that span reads FPSD. An N6-(pyridoxal phosphate)lysine modification is found at K286. The pyridoxal 5'-phosphate site is built by W326 and N354.

This sequence belongs to the kynureninase family. Homodimer. The cofactor is pyridoxal 5'-phosphate.

It is found in the cytoplasm. It carries out the reaction L-kynurenine + H2O = anthranilate + L-alanine + H(+). The catalysed reaction is 3-hydroxy-L-kynurenine + H2O = 3-hydroxyanthranilate + L-alanine + H(+). Its pathway is amino-acid degradation; L-kynurenine degradation; L-alanine and anthranilate from L-kynurenine: step 1/1. The protein operates within cofactor biosynthesis; NAD(+) biosynthesis; quinolinate from L-kynurenine: step 2/3. Functionally, catalyzes the cleavage of L-kynurenine (L-Kyn) and L-3-hydroxykynurenine (L-3OHKyn) into anthranilic acid (AA) and 3-hydroxyanthranilic acid (3-OHAA), respectively. This is Kynureninase 1 (bna5-1) from Aspergillus clavatus (strain ATCC 1007 / CBS 513.65 / DSM 816 / NCTC 3887 / NRRL 1 / QM 1276 / 107).